A 149-amino-acid polypeptide reads, in one-letter code: DnaJ homolog subfamily C member 24 (149 aa).

Positions 11-82 (DWYSILGADP…ETKREYDLQR (72 aa)) constitute a J domain. The DPH-type MB domain occupies 93–148 (VDAQVYLEEMSWNEGDHSFYLSCRCGGKYSVSKDEAEEVSLISCDTCSLIIELLHY). Positions 115, 117, 136, and 139 each coordinate Zn(2+).

It belongs to the DPH4 family. As to quaternary structure, monomer and homooligomer. Iron binding promotes oligomerization.

It is found in the cytoplasm. It localises to the cytoskeleton. The protein operates within protein modification; peptidyl-diphthamide biosynthesis. Stimulates the ATPase activity of several Hsp70-type chaperones. This ability is enhanced by iron-binding. The iron-bound form is redox-active and can function as electron carrier. Plays a role in the diphthamide biosynthesis, a post-translational modification of histidine which occurs in translation elongation factor 2 (EEF2) which can be ADP-ribosylated by diphtheria toxin and by Pseudomonas exotoxin A (Eta). This chain is DnaJ homolog subfamily C member 24, found in Homo sapiens (Human).